We begin with the raw amino-acid sequence, 329 residues long: Vomeronasal type-1 receptor 43 (329 aa).

Topologically, residues 1 to 32 (MSKILFFSPCSLFSHTMNKNSRLHTNSNIGNT) are extracellular. A helical membrane pass occupies residues 33–53 (FFSEIGIGITGNSFLLLYHIL). At 54-65 (KFIRGHRPRLTD) the chain is on the cytoplasmic side. Residues 66 to 86 (LPIGLLSLIHLLMLLVAAFIA) form a helical membrane-spanning segment. Topologically, residues 87–109 (TDIFISRRGWDDIICKFLVYLYR) are extracellular. A disulfide bridge links cysteine 101 with cysteine 188. Residues 110–130 (VLRGLSLCTTSMLSVLQAIIL) form a helical membrane-spanning segment. Residues 131–147 (SPRSSCLSKFKHISLHH) lie on the Cytoplasmic side of the membrane. A helical membrane pass occupies residues 148-168 (ILCAILFLSVLYMLISSQLLV). Over 169-209 (SIIATPNLTTNDLTYVTQSCSILPLSYLVESINSTLLAIRE) the chain is Extracellular. N-linked (GlcNAc...) asparagine glycans are attached at residues asparagine 175 and asparagine 201. The chain crosses the membrane as a helical span at residues 210-230 (YFLISLMFLSTWYIVALLCMH). Residues 231 to 255 (RKQTQHLQETRLSLKKSPEQSATQT) lie on the Cytoplasmic side of the membrane. The helical transmembrane segment at 256–276 (ILMLMTFFVLMTIYDNIVSCL) threads the bilayer. The Extracellular portion of the chain corresponds to 277–285 (RTMLLNDPT). The helical transmembrane segment at 286-306 (SYSIELFMIHIYATVSPFVFM) threads the bilayer. At 307 to 329 (SNEKHIVNFLRSMGKRMINLNLH) the chain is on the cytoplasmic side.

The protein belongs to the G-protein coupled receptor 1 family.

It localises to the cell membrane. Functionally, putative pheromone receptor implicated in the regulation of social and reproductive behavior. The chain is Vomeronasal type-1 receptor 43 (Vmn1r43) from Mus musculus (Mouse).